We begin with the raw amino-acid sequence, 389 residues long: 1-deoxy-D-xylulose 5-phosphate reductoisomerase (389 aa).

Residues Thr-10, Gly-11, Ser-12, Ile-13, Asn-38, and Asn-122 each coordinate NADPH. Lys-123 is a binding site for 1-deoxy-D-xylulose 5-phosphate. An NADPH-binding site is contributed by Glu-124. Asp-148 lines the Mn(2+) pocket. 1-deoxy-D-xylulose 5-phosphate is bound by residues Ser-149, Glu-150, Ser-173, and His-196. Glu-150 serves as a coordination point for Mn(2+). Position 202 (Gly-202) interacts with NADPH. 1-deoxy-D-xylulose 5-phosphate is bound by residues Ser-209, Asn-214, Lys-215, and Glu-218. Mn(2+) is bound at residue Glu-218.

Belongs to the DXR family. The cofactor is Mg(2+). It depends on Mn(2+) as a cofactor.

The enzyme catalyses 2-C-methyl-D-erythritol 4-phosphate + NADP(+) = 1-deoxy-D-xylulose 5-phosphate + NADPH + H(+). It participates in isoprenoid biosynthesis; isopentenyl diphosphate biosynthesis via DXP pathway; isopentenyl diphosphate from 1-deoxy-D-xylulose 5-phosphate: step 1/6. In terms of biological role, catalyzes the NADPH-dependent rearrangement and reduction of 1-deoxy-D-xylulose-5-phosphate (DXP) to 2-C-methyl-D-erythritol 4-phosphate (MEP). The protein is 1-deoxy-D-xylulose 5-phosphate reductoisomerase of Wolbachia sp. subsp. Brugia malayi (strain TRS).